The sequence spans 326 residues: Tagatose 1,6-diphosphate aldolase (326 aa).

This sequence belongs to the aldolase LacD family.

It carries out the reaction D-tagatofuranose 1,6-bisphosphate = D-glyceraldehyde 3-phosphate + dihydroxyacetone phosphate. It functions in the pathway carbohydrate metabolism; D-tagatose 6-phosphate degradation; D-glyceraldehyde 3-phosphate and glycerone phosphate from D-tagatose 6-phosphate: step 2/2. This is Tagatose 1,6-diphosphate aldolase from Streptococcus pneumoniae (strain ATCC BAA-255 / R6).